The sequence spans 429 residues: UDP-glucuronate 4-epimerase 1 (429 aa).

Helical transmembrane passes span 36–56 and 87–107; these read FLWA…QSFV and GISV…SLAL. 89 to 120 is a binding site for NAD(+); it reads SVLVTGATGFVGSHVSLALRKRGDGVVGLDNF. Catalysis depends on Y239, which acts as the Proton acceptor.

The protein belongs to the NAD(P)-dependent epimerase/dehydratase family. As to quaternary structure, homodimer. In terms of tissue distribution, in root stele, leaves, siliques, flowers, pollen and stems.

Its subcellular location is the golgi apparatus. The protein localises to the golgi stack membrane. It catalyses the reaction UDP-alpha-D-glucuronate = UDP-alpha-D-galacturonate. Inhibited by UDP-Xylose. In terms of biological role, UDP-D-glucuronate 4-epimerase involved in the synthesis of the negatively charged monosaccharide that forms the backbone of pectic cell wall components. The protein is UDP-glucuronate 4-epimerase 1 (GAE1) of Arabidopsis thaliana (Mouse-ear cress).